A 501-amino-acid polypeptide reads, in one-letter code: Uridine kinase (501 aa).

Ser17 carries the phosphoserine modification. Residue 63 to 70 (GASGSGKT) participates in ATP binding. Position 276 is a phosphoserine (Ser276).

This sequence belongs to the uridine kinase family.

The protein localises to the cytoplasm. Its subcellular location is the nucleus. It catalyses the reaction uridine + ATP = UMP + ADP + H(+). It carries out the reaction cytidine + ATP = CMP + ADP + H(+). Its pathway is pyrimidine metabolism; CTP biosynthesis via salvage pathway; CTP from cytidine: step 1/3. It participates in pyrimidine metabolism; UMP biosynthesis via salvage pathway; UMP from uridine: step 1/1. Its function is as follows. Catalyzes the conversion of uridine into UMP and cytidine into CMP in the pyrimidine salvage pathway. This chain is Uridine kinase (URK1), found in Saccharomyces cerevisiae (strain ATCC 204508 / S288c) (Baker's yeast).